Here is a 247-residue protein sequence, read N- to C-terminus: MGQKVHPIGIRLGVVKKHNANWYADPKQYSEYLLNDLQVRDYLRKKLDNAMISHIMIERPTGAAKITISTARPGIVIGKKGEDIEKLQKELTKMMGVPAQVNIEEITSPDLDARLVAEGIASQLERRVMFRRAMKRAVQNSMRSGAQGIKVELSGRLGGAEIARTEWYREGRVPLHTLRADIDYASVRAETTYGTIGVKVWVFRGEILDGMDSVYNPPKEDKTRAPKRRGRSNSNRRNSDRANTDRG.

Residues 39-107 (VRDYLRKKLD…PAQVNIEEIT (69 aa)) enclose the KH type-2 domain. The segment at 213–247 (SVYNPPKEDKTRAPKRRGRSNSNRRNSDRANTDRG) is disordered. A compositionally biased stretch (basic and acidic residues) spans 237-247 (RNSDRANTDRG).

This sequence belongs to the universal ribosomal protein uS3 family. As to quaternary structure, part of the 30S ribosomal subunit. Forms a tight complex with proteins S10 and S14.

In terms of biological role, binds the lower part of the 30S subunit head. Binds mRNA in the 70S ribosome, positioning it for translation. The protein is Small ribosomal subunit protein uS3 of Psychrobacter sp. (strain PRwf-1).